A 339-amino-acid polypeptide reads, in one-letter code: Glycerol-3-phosphate dehydrogenase [NAD(P)+] (339 aa).

NADPH-binding residues include serine 13, tryptophan 14, and lysine 108. Residues lysine 108, glycine 139, and serine 141 each contribute to the sn-glycerol 3-phosphate site. Alanine 143 contacts NADPH. Sn-glycerol 3-phosphate-binding residues include lysine 194, aspartate 247, serine 257, arginine 258, and asparagine 259. Catalysis depends on lysine 194, which acts as the Proton acceptor. Arginine 258 is an NADPH binding site. Residues valine 282 and glutamate 284 each coordinate NADPH.

The protein belongs to the NAD-dependent glycerol-3-phosphate dehydrogenase family.

The protein localises to the cytoplasm. It carries out the reaction sn-glycerol 3-phosphate + NAD(+) = dihydroxyacetone phosphate + NADH + H(+). It catalyses the reaction sn-glycerol 3-phosphate + NADP(+) = dihydroxyacetone phosphate + NADPH + H(+). The protein operates within membrane lipid metabolism; glycerophospholipid metabolism. In terms of biological role, catalyzes the reduction of the glycolytic intermediate dihydroxyacetone phosphate (DHAP) to sn-glycerol 3-phosphate (G3P), the key precursor for phospholipid synthesis. This chain is Glycerol-3-phosphate dehydrogenase [NAD(P)+], found in Streptococcus equi subsp. zooepidemicus (strain H70).